We begin with the raw amino-acid sequence, 459 residues long: Hemopexin (459 aa).

The N-terminal stretch at 1-23 (MARALRVPVALWLLGLCWSLAKA) is a signal peptide. Disulfide bonds link C52/C232, C150/C155, and C189/C201. Hemopexin repeat units follow at residues 55-95 (GWGF…WKDA), 96-140 (PSPV…FPGI), 141-185 (PFPL…SWPA), and 186-232 (VGNC…FMSC). H81 serves as a coordination point for heme. Residue H151 coordinates heme. An N-linked (GlcNAc...) asparagine glycan is attached at N188. N218 carries N-linked (GlcNAc...) asparagine glycosylation. Residue H237 coordinates heme. N-linked (GlcNAc...) asparagine glycosylation occurs at N241. 3 disulfide bridges follow: C250–C453, C359–C401, and C411–C428. Hemopexin repeat units follow at residues 252-297 (PHLV…WPQG), 298-345 (PSTV…FGSP), 350-389 (LHSV…WTEL), and 393-444 (HTKV…LPQA). H286 lines the heme pocket.

Belongs to the hemopexin family.

The protein localises to the secreted. Binds heme and transports it to the liver for breakdown and iron recovery, after which the free hemopexin returns to the circulation. The sequence is that of Hemopexin (HPX) from Bos taurus (Bovine).